Consider the following 235-residue polypeptide: Probable inactive serine protease 37 (235 aa).

The first 19 residues, 1–19 (MKFIFYLSVLTGTFLFADS), serve as a signal peptide directing secretion. In terms of domain architecture, Peptidase S1 spans 20–233 (SVQKEDPAPY…YVSWIENTAK (214 aa)). Disulfide bonds link Cys40-Cys56, Cys131-Cys198, and Cys163-Cys177.

It belongs to the peptidase S1 family.

Its subcellular location is the cytoplasmic vesicle. It is found in the secretory vesicle. The protein resides in the acrosome. It localises to the secreted. In terms of biological role, plays a role in male fertility. May have a role in sperm migration or binding to zona-intact eggs. Involved in the activation of the proacrosin/acrosin system. The chain is Probable inactive serine protease 37 from Macaca fascicularis (Crab-eating macaque).